The primary structure comprises 203 residues: Ponticulin-like protein H (203 aa).

An N-terminal signal peptide occupies residues 1–20 (MKLLNSLVLLAALCAITANG). Asn-58 is a glycosylation site (N-linked (GlcNAc...) asparagine). A compositionally biased stretch (low complexity) spans 127 to 168 (SDSTNPTSTPSTTPSATPTVTPSTTPTVTPTVTPSTTPTVAP). Residues 127-183 (SDSTNPTSTPSTTPSATPTVTPSTTPTVTPTVTPSTTPTVAPTVPPTTPPSTTTGSG) form a disordered region. Residue Ser-182 is the site of GPI-like-anchor amidated serine attachment. Positions 183–203 (GSTVVASFGLIVSILLASLAL) are cleaved as a propeptide — removed in mature form.

The protein belongs to the ponticulin family. The GPI-like-anchor contains a phosphoceramide group, rather than a phosphatidyl group.

Its subcellular location is the cell membrane. Functionally, binds F-actin and nucleates actin assembly. This Dictyostelium discoideum (Social amoeba) protein is Ponticulin-like protein H (ponH).